The primary structure comprises 302 residues: Ribosomal RNA small subunit methyltransferase H (302 aa).

S-adenosyl-L-methionine-binding positions include G43 to H45, D62, F89, D105, and H112. The tract at residues E276 to N302 is disordered.

Belongs to the methyltransferase superfamily. RsmH family.

The protein localises to the cytoplasm. It catalyses the reaction cytidine(1402) in 16S rRNA + S-adenosyl-L-methionine = N(4)-methylcytidine(1402) in 16S rRNA + S-adenosyl-L-homocysteine + H(+). Functionally, specifically methylates the N4 position of cytidine in position 1402 (C1402) of 16S rRNA. This is Ribosomal RNA small subunit methyltransferase H from Nostoc sp. (strain PCC 7120 / SAG 25.82 / UTEX 2576).